The chain runs to 179 residues: Nicotinamide-nucleotide adenylyltransferase (179 aa).

This sequence belongs to the archaeal NMN adenylyltransferase family.

The protein resides in the cytoplasm. The enzyme catalyses beta-nicotinamide D-ribonucleotide + ATP + H(+) = diphosphate + NAD(+). The protein operates within cofactor biosynthesis; NAD(+) biosynthesis; NAD(+) from nicotinamide D-ribonucleotide: step 1/1. This is Nicotinamide-nucleotide adenylyltransferase from Thermoplasma acidophilum (strain ATCC 25905 / DSM 1728 / JCM 9062 / NBRC 15155 / AMRC-C165).